The sequence spans 1279 residues: Sterol regulatory element-binding protein cleavage-activating protein (1279 aa).

The Cytoplasmic portion of the chain corresponds to 1–18; sequence MTLTERLREKISRAFYNH. The helical transmembrane segment at 19–39 threads the bilayer; that stretch reads GLLCASYPIPIILFTGFCILA. Topologically, residues 40-279 are lumenal; that stretch reads CCYPLLKLPL…SLVHVHFKEE (240 aa). The segment at 46–284 is loop-1; it reads KLPLPGTGPV…HFKEEIGVAE (239 aa). The interval 60 to 80 is disordered; it reads PVKDYSPPPVDSDRKQGEPTE. The N-linked (GlcNAc...) asparagine glycan is linked to Asn-263. Residues 280-300 traverse the membrane as a helical segment; it reads IGVAELIPLVTTYIILFAYIY. The SSD domain occupies 284–442; it reads ELIPLVTTYI…MLFFTTVLSI (159 aa). Residues 301 to 312 are Cytoplasmic-facing; it reads FSTRKIDMVKSK. Residues 313-333 form a helical membrane-spanning segment; sequence WGLALAAVVTVLSSLLMSVGL. At 334–344 the chain is on the lumenal side; sequence CTLFGLTPTLN. A helical membrane pass occupies residues 345 to 365; sequence GGEIFPYLVVVIGLENVLVLT. The Cytoplasmic segment spans residues 366 to 401; sequence KSVVSTPVDLEVKLRIAQGLSSESWSIMKNMATELG. Residues 402-422 traverse the membrane as a helical segment; the sequence is IILIGYFTLVPAIQEFCLFAV. Residue Val-423 is a topological domain, lumenal. A helical transmembrane segment spans residues 424-444; it reads GLVSDFFLQMLFFTTVLSIDI. Over 445–518 the chain is Cytoplasmic; the sequence is RRMELADLNK…FLARTRLAQR (74 aa). The short motif at 447–452 is the ER export signal element; it reads MELADL. Glycyl lysine isopeptide (Lys-Gly) (interchain with G-Cter in ubiquitin) cross-links involve residues Lys-454 and Lys-466. A helical transmembrane segment spans residues 519 to 539; it reads LIMAGTVVWIGILVYTDPAGL. Positions 535 to 710 are loop-7; sequence DPAGLRNYLA…QAHGDVTLYK (176 aa). Over 540 to 709 the chain is Lumenal; it reads RNYLAAQVTE…VQAHGDVTLY (170 aa). The interval 579–615 is disordered; it reads IFPPDAPKLPENQTSPGESPERGGPAEVVHDSPVPEV. N-linked (GlcNAc...) asparagine glycosylation is found at Asn-590 and Asn-641. The segment at 668–696 is disordered; it reads EGRHPQDGRSAWPPPGPIPAGHWEAGPKG. Residues 710-730 traverse the membrane as a helical segment; sequence KVAALGLATGIVLVLLLLCLY. The Cytoplasmic segment spans residues 731–1279; sequence RVLCPRNYGQ…YVPSVLEKLD (549 aa). An interaction with SREBF2 region spans residues 731–1279; the sequence is RVLCPRNYGQ…YVPSVLEKLD (549 aa). The WD 1 repeat unit spans residues 771–811; that stretch reads VLRGHLMDIECLASDGMLLVSCCLAGHVCVWDAQTGDCLTR. Residues 811–904 are disordered; that stretch reads RIPRPGRQRR…PRHRAVCGRS (94 aa). Phosphoserine occurs at positions 822, 838, and 851. The span at 877–891 shows a compositional bias: polar residues; that stretch reads IDTNFSAQPRSSQPT. Ser-907 and Ser-937 each carry phosphoserine. The tract at residues 931 to 962 is disordered; that stretch reads PALRPPSPGPVLSQAPEDEGGSPEKGSPSLAW. WD repeat units lie at residues 952–1002 and 1005–1042; these read SPEK…LCCS and EVSSGITALVFLDKRIVAARLNGSLDFFSLETHTALSP. An Omega-N-methylarginine modification is found at Arg-1051. WD repeat units follow at residues 1077-1114, 1117-1155, 1158-1195, and 1197-1235; these read AHQKPITALKAAAGRLVTGSQDHTLRVFRLEDSCCLFT, GHSGAITTVYIDQTMVLASGGQDGAICLWDVLTGSRVSH, AHRGDVTSLTCTTSCVISSGLDDLISIWDRSTGIKFYS, and QQDLGCGASLGVISDNLLVTGGQGCVSFWDLNYGDLLQT.

It belongs to the WD repeat SCAP family. Membrane region forms a homotetramer. Component of the SCAP-SREBP complex (composed of SCAP and SREBF1/SREBP1 or SREBF2/SREBP2); interacts with SREBF1/SREBP1 or SREBF2/SREBP2 through its C-terminal cytoplasmic domain. Forms a ternary complex with INSIG1 or INSIG2 through its transmembrane domains at high sterol concentrations. Interacts with PAQR3; the interaction anchors the SCAP-SREBP complex to the Golgi apparatus in low cholesterol conditions. Interacts with the SEC23-SEC24 complex in a SAR1-GTP-dependent manner through an ER export signal in its third cytoplasmic loop. Interacts with RNF139; the interaction inhibits the interaction of SCAP with SEC24B and hampering the ER to Golgi transport of the SCAP-SREBP complex. Interacts with SPRING1. Post-translationally, ubiquitinated at Lys-454 and Lys-466. RNF145 triggers ubiquitination of SCAP, likely inhibiting SCAP-SREBP complex transport to the Golgi apparatus and the subsequent processing/maturation of SREBF2/SREBP2.

The protein resides in the endoplasmic reticulum membrane. It is found in the golgi apparatus membrane. The protein localises to the cytoplasmic vesicle. Its subcellular location is the COPII-coated vesicle membrane. Escort protein required for cholesterol as well as lipid homeostasis. Regulates export of the SCAP-SREBP complex from the endoplasmic reticulum to the Golgi upon low cholesterol, thereby regulating the processing of sterol regulatory element-binding proteins (SREBPs) SREBF1/SREBP1 and SREBF2/SREBP2. At high sterol concentrations, formation of a ternary complex with INSIG (INSIG1 or INSIG2) leads to mask the ER export signal in SCAP, promoting retention of the complex in the endoplasmic reticulum. Low sterol concentrations trigger release of INSIG, a conformational change in the SSD domain of SCAP, unmasking of the ER export signal, promoting recruitment into COPII-coated vesicles and transport of the SCAP-SREBP to the Golgi: in the Golgi, SREBPs are then processed, releasing the transcription factor fragment of SREBPs from the membrane, its import into the nucleus and up-regulation of LDLR, INSIG1 and the mevalonate pathway. Binds cholesterol via its SSD domain. This is Sterol regulatory element-binding protein cleavage-activating protein from Homo sapiens (Human).